Consider the following 883-residue polypeptide: Envelope glycoprotein B (883 aa).

The first 31 residues, Met-1–Ser-31, serve as a signal peptide directing secretion. The Virion surface portion of the chain corresponds to Gln-32 to Pro-750. 5 cysteine pairs are disulfide-bonded: Cys-77/Cys-535, Cys-94/Cys-491, Cys-167/Cys-229, Cys-321/Cys-369, and Cys-558/Cys-608. N-linked (GlcNAc...) asparagine; by host glycans are attached at residues Asn-102 and Asn-121. An involved in fusion and/or binding to host membrane region spans residues Thr-134–Arg-140. The N-linked (GlcNAc...) asparagine; by host glycan is linked to Asn-211. Residues His-216 to Thr-223 form an involved in fusion and/or binding to host membrane region. N-linked (GlcNAc...) asparagine; by host glycans are attached at residues Asn-262 and Asn-360. The interval Gln-428–Ile-457 is disordered. N-linked (GlcNAc...) asparagine; by host glycosylation is found at Asn-579, Asn-635, and Asn-649. Hydrophobic membrane proximal region stretches follow at residues Ile-694–Ser-748 and Ala-724–Ala-744. A helical membrane pass occupies residues Phe-751–Phe-771. Residues Lys-772–Glu-883 are Intravirion-facing. Residues Pro-791–Asp-817 are disordered. A compositionally biased stretch (acidic residues) spans Asp-806–Asp-817. Residues Tyr-868–Leu-871 carry the Internalization motif motif.

It belongs to the herpesviridae glycoprotein B family. In terms of assembly, homotrimer; disulfide-linked. Binds to heparan sulfate proteoglycans. Interacts with gH/gL heterodimer. Post-translationally, a proteolytic cleavage by host furin generates two subunits that remain linked by disulfide bonds.

It localises to the virion membrane. It is found in the host cell membrane. Its subcellular location is the host endosome membrane. The protein resides in the host Golgi apparatus membrane. Envelope glycoprotein that forms spikes at the surface of virion envelope. Essential for the initial attachment to heparan sulfate moieties of the host cell surface proteoglycans. Involved in fusion of viral and cellular membranes leading to virus entry into the host cell. Following initial binding to its host receptors, membrane fusion is mediated by the fusion machinery composed at least of gB and the heterodimer gH/gL. May be involved in the fusion between the virion envelope and the outer nuclear membrane during virion egress. In Infectious laryngotracheitis virus (strain SA-2) (ILTV), this protein is Envelope glycoprotein B.